The chain runs to 273 residues: Putative pyruvate, phosphate dikinase regulatory protein (273 aa).

Position 149–156 (149–156) interacts with ADP; the sequence is GPSRTSKT.

This sequence belongs to the pyruvate, phosphate/water dikinase regulatory protein family. PDRP subfamily.

The catalysed reaction is N(tele)-phospho-L-histidyl/L-threonyl-[pyruvate, phosphate dikinase] + ADP = N(tele)-phospho-L-histidyl/O-phospho-L-threonyl-[pyruvate, phosphate dikinase] + AMP + H(+). The enzyme catalyses N(tele)-phospho-L-histidyl/O-phospho-L-threonyl-[pyruvate, phosphate dikinase] + phosphate + H(+) = N(tele)-phospho-L-histidyl/L-threonyl-[pyruvate, phosphate dikinase] + diphosphate. In terms of biological role, bifunctional serine/threonine kinase and phosphorylase involved in the regulation of the pyruvate, phosphate dikinase (PPDK) by catalyzing its phosphorylation/dephosphorylation. This Rickettsia canadensis (strain McKiel) protein is Putative pyruvate, phosphate dikinase regulatory protein.